The primary structure comprises 132 residues: Transmembrane protein C1orf162 homolog (132 aa).

A helical membrane pass occupies residues 36 to 56 (IILAFFAGVLLTLLIVALIFL). The segment at 95 to 132 (TFKPPEENSNDLTRNHSSGLEPTIYSQIKVTDSDLPLP) is disordered. Over residues 104–124 (NDLTRNHSSGLEPTIYSQIKV) the composition is skewed to polar residues. S111 is modified (phosphoserine).

It is found in the membrane. The protein is Transmembrane protein C1orf162 homolog of Mus musculus (Mouse).